The primary structure comprises 47 residues: Potassium channel toxin gamma-KTx 5.2 (47 aa).

Disulfide bonds link Cys-5/Cys-23, Cys-11/Cys-34, Cys-20/Cys-39, and Cys-24/Cys-41.

This sequence belongs to the ergtoxin family. Gamma-KTx 5 subfamily. Expressed by the venom gland.

It localises to the secreted. In terms of biological role, reversibly blocks Kv11/ERG potassium channels. The sequence is that of Potassium channel toxin gamma-KTx 5.2 from Centruroides gracilis (Slenderbrown scorpion).